The following is a 219-amino-acid chain: ATP-dependent dethiobiotin synthetase BioD (219 aa).

ATP is bound at residue 14 to 19; the sequence is DVGKTY. Position 18 (T18) interacts with Mg(2+). K37 is an active-site residue. S41 provides a ligand contact to substrate. Residues D54, 114-117, and 175-176 contribute to the ATP site; these read EGAG and NN. Mg(2+) is bound by residues D54 and E114.

Belongs to the dethiobiotin synthetase family. Homodimer. Mg(2+) serves as cofactor.

It is found in the cytoplasm. It carries out the reaction (7R,8S)-7,8-diammoniononanoate + CO2 + ATP = (4R,5S)-dethiobiotin + ADP + phosphate + 3 H(+). It participates in cofactor biosynthesis; biotin biosynthesis; biotin from 7,8-diaminononanoate: step 1/2. Its function is as follows. Catalyzes a mechanistically unusual reaction, the ATP-dependent insertion of CO2 between the N7 and N8 nitrogen atoms of 7,8-diaminopelargonic acid (DAPA, also called 7,8-diammoniononanoate) to form a ureido ring. This is ATP-dependent dethiobiotin synthetase BioD from Fusobacterium nucleatum subsp. nucleatum (strain ATCC 25586 / DSM 15643 / BCRC 10681 / CIP 101130 / JCM 8532 / KCTC 2640 / LMG 13131 / VPI 4355).